The primary structure comprises 127 residues: Glycine cleavage system H protein (127 aa).

The region spanning 24–105 is the Lipoyl-binding domain; it reads AALVGITDFA…YGEGWLVKIR (82 aa). K65 bears the N6-lipoyllysine mark.

Belongs to the GcvH family. In terms of assembly, the glycine cleavage system is composed of four proteins: P, T, L and H. The cofactor is (R)-lipoate.

Functionally, the glycine cleavage system catalyzes the degradation of glycine. The H protein shuttles the methylamine group of glycine from the P protein to the T protein. The chain is Glycine cleavage system H protein from Chlorobium limicola (strain DSM 245 / NBRC 103803 / 6330).